Consider the following 936-residue polypeptide: Isoleucine--tRNA ligase (936 aa).

Positions 58-68 match the 'HIGH' region motif; that stretch reads PYANGRAHLGT. Glu561 contributes to the L-isoleucyl-5'-AMP binding site. Residues 602–606 carry the 'KMSKS' region motif; sequence KMSKS. Lys605 contributes to the ATP binding site. Zn(2+)-binding residues include Cys899, Cys902, Cys919, and Cys922.

It belongs to the class-I aminoacyl-tRNA synthetase family. IleS type 1 subfamily. As to quaternary structure, monomer. Zn(2+) serves as cofactor.

It is found in the cytoplasm. It carries out the reaction tRNA(Ile) + L-isoleucine + ATP = L-isoleucyl-tRNA(Ile) + AMP + diphosphate. Its function is as follows. Catalyzes the attachment of isoleucine to tRNA(Ile). As IleRS can inadvertently accommodate and process structurally similar amino acids such as valine, to avoid such errors it has two additional distinct tRNA(Ile)-dependent editing activities. One activity is designated as 'pretransfer' editing and involves the hydrolysis of activated Val-AMP. The other activity is designated 'posttransfer' editing and involves deacylation of mischarged Val-tRNA(Ile). This is Isoleucine--tRNA ligase from Coxiella burnetii (strain RSA 331 / Henzerling II).